The primary structure comprises 484 residues: Aldehyde dehydrogenase family 3 member H1 (484 aa).

Residue 196–201 (GSSKIG) participates in NAD(+) binding. The Proton acceptor role is filled by E218. C253 acts as the Nucleophile in catalysis.

The protein belongs to the aldehyde dehydrogenase family. As to quaternary structure, homodimer and homomultimer. In terms of tissue distribution, isoform alpha is expressed in expanded leaves and flowers. Detected in seedlings. Isoform beta is mainly expressed in flowers. Detected in leaves and seedlings.

It catalyses the reaction an aldehyde + NAD(+) + H2O = a carboxylate + NADH + 2 H(+). Its activity is regulated as follows. Thiol-based regulation. Inactivation after dimerization under oxidizing conditions. Involved in oxidative stress tolerance by detoxifying reactive aldehydes derived from lipid peroxidation. Medium- to long-chain saturated aldehydes are preferred substrates, while the short-chain aldehyde propanal is a weak substrate. Is strictely NAD(+) specific. In Arabidopsis thaliana (Mouse-ear cress), this protein is Aldehyde dehydrogenase family 3 member H1 (ALDH3H1).